Here is a 259-residue protein sequence, read N- to C-terminus: Glucosamine-6-phosphate deaminase (259 aa).

D66 serves as the catalytic Proton acceptor; for enolization step. The active-site For ring-opening step is D135. H137 functions as the Proton acceptor; for ring-opening step in the catalytic mechanism. Catalysis depends on E142, which acts as the For ring-opening step.

This sequence belongs to the glucosamine/galactosamine-6-phosphate isomerase family. NagB subfamily.

The enzyme catalyses alpha-D-glucosamine 6-phosphate + H2O = beta-D-fructose 6-phosphate + NH4(+). It functions in the pathway amino-sugar metabolism; N-acetylneuraminate degradation; D-fructose 6-phosphate from N-acetylneuraminate: step 5/5. Functionally, catalyzes the reversible isomerization-deamination of glucosamine 6-phosphate (GlcN6P) to form fructose 6-phosphate (Fru6P) and ammonium ion. In Rhodococcus opacus (strain B4), this protein is Glucosamine-6-phosphate deaminase.